The sequence spans 1139 residues: Dual 3',5'-cyclic-AMP and -GMP phosphodiesterase beta (1139 aa).

Disordered regions lie at residues 1-42 and 154-177; these read MGKV…NINK and GISE…STSN. At 1-429 the chain is on the cytoplasmic side; sequence MGKVEDFEEH…LNLNNWISSR (429 aa). Over residues 9 to 22 the composition is skewed to basic and acidic residues; the sequence is EHNKNSNQDIEKNV. Over residues 29–42 the composition is skewed to polar residues; it reads NSNTINDQNENINK. The helical transmembrane segment at 430-450 threads the bilayer; it reads MIIIGIVMLILSFIIWPLTTW. Over 451 to 462 the chain is Extracellular; that stretch reads SLKTSTWGRETY. Residues 463–483 traverse the membrane as a helical segment; sequence IIILFHTLMAINTLILIFFII. Topologically, residues 484–498 are cytoplasmic; it reads IGSTELCKYSECMSY. Residues 499-519 traverse the membrane as a helical segment; the sequence is VLFSLMVALWGLWNIAIGLTL. The Extracellular portion of the chain corresponds to 520–536; sequence EYNPNLSEMPTTTYELE. The N-linked (GlcNAc...) asparagine glycan is linked to Asn-524. A helical transmembrane segment spans residues 537-557; that stretch reads MIYVLTYIYGFLPLVIIDIFF. The Cytoplasmic segment spans residues 558–564; sequence PSRTKYN. The helical transmembrane segment at 565-585 threads the bilayer; it reads WIIHLIFIFLNSSSIILVGSA. At 586-592 the chain is on the extracellular side; sequence KPDFVPE. Residues 593-613 traverse the membrane as a helical segment; the sequence is IYVVFRILAYTTLCIFLYIGS. Topologically, residues 614 to 1139 are cytoplasmic; sequence YTSELQIRYV…TLFFIKNVSD (526 aa). Residues 775–1098 form the PDEase domain; sequence INISQLTKMI…IMWDTLMKEE (324 aa). His-847 (proton donor) is an active-site residue. 847-851 contributes to the a nucleoside 3',5'-cyclic phosphate binding site; that stretch reads HNTIH. A divalent metal cation contacts are provided by His-851, His-887, Asp-888, and Asp-1000. Positions 888, 1000, and 1052 each coordinate a nucleoside 3',5'-cyclic phosphate.

The protein belongs to the cyclic nucleotide phosphodiesterase family. A divalent metal cation serves as cofactor.

It is found in the cell membrane. Its subcellular location is the endoplasmic reticulum membrane. The catalysed reaction is 3',5'-cyclic GMP + H2O = GMP + H(+). It carries out the reaction 3',5'-cyclic AMP + H2O = AMP + H(+). Its pathway is purine metabolism; 3',5'-cyclic GMP degradation; GMP from 3',5'-cyclic GMP: step 1/1. It participates in purine metabolism; 3',5'-cyclic AMP degradation; AMP from 3',5'-cyclic AMP: step 1/1. Plays a role in signal transduction by regulating the intracellular concentration of cyclic nucleotides cAMP and cGMP. Catalyzes the hydrolysis of both cAMP and cGMP to 5'-AMP and 5'-GMP, respectively. By regulating cAMP levels during the asexual blood stage and, thus PKA activation, required for merozoite invasion of erythrocytes and for the parasite development immediately following invasion. This is Dual 3',5'-cyclic-AMP and -GMP phosphodiesterase beta from Plasmodium falciparum (isolate 3D7).